A 319-amino-acid chain; its full sequence is NH(3)-dependent NAD(+) synthetase (319 aa).

Residue 33–40 (GLSGGIDS) participates in ATP binding. Residue D39 participates in Mg(2+) binding. R169 provides a ligand contact to deamido-NAD(+). Residue T189 participates in ATP binding. E194 provides a ligand contact to Mg(2+). Deamido-NAD(+) is bound by residues K202 and D209. Residues K218 and T240 each contribute to the ATP site.

The protein belongs to the NAD synthetase family. Homodimer.

It catalyses the reaction deamido-NAD(+) + NH4(+) + ATP = AMP + diphosphate + NAD(+) + H(+). Its pathway is cofactor biosynthesis; NAD(+) biosynthesis; NAD(+) from deamido-NAD(+) (ammonia route): step 1/1. In terms of biological role, catalyzes the ATP-dependent amidation of deamido-NAD to form NAD. Uses ammonia as a nitrogen source. This Mesorhizobium japonicum (strain LMG 29417 / CECT 9101 / MAFF 303099) (Mesorhizobium loti (strain MAFF 303099)) protein is NH(3)-dependent NAD(+) synthetase.